The chain runs to 264 residues: 3-methyl-2-oxobutanoate hydroxymethyltransferase (264 aa).

Mg(2+) contacts are provided by D44 and D83. 3-methyl-2-oxobutanoate contacts are provided by residues 44-45 (DS), D83, and K112. Position 114 (E114) interacts with Mg(2+). Catalysis depends on E181, which acts as the Proton acceptor.

It belongs to the PanB family. Homodecamer; pentamer of dimers. The cofactor is Mg(2+).

It localises to the cytoplasm. It carries out the reaction 3-methyl-2-oxobutanoate + (6R)-5,10-methylene-5,6,7,8-tetrahydrofolate + H2O = 2-dehydropantoate + (6S)-5,6,7,8-tetrahydrofolate. Its pathway is cofactor biosynthesis; coenzyme A biosynthesis. In terms of biological role, catalyzes the reversible reaction in which hydroxymethyl group from 5,10-methylenetetrahydrofolate is transferred onto alpha-ketoisovalerate to form ketopantoate. This chain is 3-methyl-2-oxobutanoate hydroxymethyltransferase, found in Pyrobaculum arsenaticum (strain DSM 13514 / JCM 11321 / PZ6).